A 106-amino-acid chain; its full sequence is MKKIKRDDEVIVTTGKDKDKRGKVLKVLDDGRVLVSGINMMKKHTKPNPMLGTPGGIVEKEAPIQASNVAIFNPQTGKADRVGFQIKEDGTKVRIFKSTNEAVDNQ.

It belongs to the universal ribosomal protein uL24 family. As to quaternary structure, part of the 50S ribosomal subunit.

Its function is as follows. One of two assembly initiator proteins, it binds directly to the 5'-end of the 23S rRNA, where it nucleates assembly of the 50S subunit. In terms of biological role, one of the proteins that surrounds the polypeptide exit tunnel on the outside of the subunit. This Marinobacter nauticus (strain ATCC 700491 / DSM 11845 / VT8) (Marinobacter aquaeolei) protein is Large ribosomal subunit protein uL24.